We begin with the raw amino-acid sequence, 582 residues long: Aspartate--tRNA ligase (582 aa).

Glu174 contacts L-aspartate. Residues 198–201 (QITK) form an aspartate region. Arg220 serves as a coordination point for L-aspartate. ATP contacts are provided by residues 220–222 (RDE) and Gln229. Residue His443 participates in L-aspartate binding. Glu477 provides a ligand contact to ATP. Arg484 lines the L-aspartate pocket. Position 529–532 (529–532 (GLDR)) interacts with ATP.

This sequence belongs to the class-II aminoacyl-tRNA synthetase family. Type 1 subfamily. In terms of assembly, homodimer.

The protein localises to the cytoplasm. The catalysed reaction is tRNA(Asp) + L-aspartate + ATP = L-aspartyl-tRNA(Asp) + AMP + diphosphate. Functionally, catalyzes the attachment of L-aspartate to tRNA(Asp) in a two-step reaction: L-aspartate is first activated by ATP to form Asp-AMP and then transferred to the acceptor end of tRNA(Asp). In Streptococcus pyogenes serotype M5 (strain Manfredo), this protein is Aspartate--tRNA ligase.